Here is a 242-residue protein sequence, read N- to C-terminus: Biosynthetic peptidoglycan transglycosylase (242 aa).

The helical transmembrane segment at Leu12 to Pro31 threads the bilayer.

This sequence belongs to the glycosyltransferase 51 family.

Its subcellular location is the cell inner membrane. It catalyses the reaction [GlcNAc-(1-&gt;4)-Mur2Ac(oyl-L-Ala-gamma-D-Glu-L-Lys-D-Ala-D-Ala)](n)-di-trans,octa-cis-undecaprenyl diphosphate + beta-D-GlcNAc-(1-&gt;4)-Mur2Ac(oyl-L-Ala-gamma-D-Glu-L-Lys-D-Ala-D-Ala)-di-trans,octa-cis-undecaprenyl diphosphate = [GlcNAc-(1-&gt;4)-Mur2Ac(oyl-L-Ala-gamma-D-Glu-L-Lys-D-Ala-D-Ala)](n+1)-di-trans,octa-cis-undecaprenyl diphosphate + di-trans,octa-cis-undecaprenyl diphosphate + H(+). Its pathway is cell wall biogenesis; peptidoglycan biosynthesis. Peptidoglycan polymerase that catalyzes glycan chain elongation from lipid-linked precursors. This is Biosynthetic peptidoglycan transglycosylase from Ectopseudomonas mendocina (strain ymp) (Pseudomonas mendocina).